Here is a 79-residue protein sequence, read N- to C-terminus: DNA-directed RNA polymerase subunit omega (79 aa).

The protein belongs to the RNA polymerase subunit omega family. The RNAP catalytic core consists of 2 alpha, 1 beta, 1 beta' and 1 omega subunit. When a sigma factor is associated with the core the holoenzyme is formed, which can initiate transcription.

It carries out the reaction RNA(n) + a ribonucleoside 5'-triphosphate = RNA(n+1) + diphosphate. In terms of biological role, promotes RNA polymerase assembly. Latches the N- and C-terminal regions of the beta' subunit thereby facilitating its interaction with the beta and alpha subunits. The chain is DNA-directed RNA polymerase subunit omega (rpoZ) from Thermotoga maritima (strain ATCC 43589 / DSM 3109 / JCM 10099 / NBRC 100826 / MSB8).